The chain runs to 105 residues: Small ribosomal subunit protein uS10 (105 aa).

This sequence belongs to the universal ribosomal protein uS10 family. Part of the 30S ribosomal subunit.

Involved in the binding of tRNA to the ribosomes. This is Small ribosomal subunit protein uS10 from Synechococcus sp. (strain JA-2-3B'a(2-13)) (Cyanobacteria bacterium Yellowstone B-Prime).